Here is a 185-residue protein sequence, read N- to C-terminus: Transcription factor FapR (185 aa).

Belongs to the FapR family.

In terms of biological role, transcriptional factor involved in regulation of membrane lipid biosynthesis by repressing genes involved in fatty acid and phospholipid metabolism. The sequence is that of Transcription factor FapR from Staphylococcus aureus (strain Mu3 / ATCC 700698).